The primary structure comprises 188 residues: Peptide deformylase (188 aa).

Residues cysteine 109 and histidine 152 each coordinate Fe cation. Residue glutamate 153 is part of the active site. Position 156 (histidine 156) interacts with Fe cation.

This sequence belongs to the polypeptide deformylase family. Fe(2+) serves as cofactor.

The enzyme catalyses N-terminal N-formyl-L-methionyl-[peptide] + H2O = N-terminal L-methionyl-[peptide] + formate. In terms of biological role, removes the formyl group from the N-terminal Met of newly synthesized proteins. Requires at least a dipeptide for an efficient rate of reaction. N-terminal L-methionine is a prerequisite for activity but the enzyme has broad specificity at other positions. The polypeptide is Peptide deformylase (Chloroflexus aurantiacus (strain ATCC 29366 / DSM 635 / J-10-fl)).